The chain runs to 405 residues: MLPLLLCIVPYCWSSRLDPRASSFDYNGEKVRGVNLGGWLVLEPWITPSIFDAAGAEAVDEWSLTKILGKEEAEARLSAHWKSFVSAGDFQRMADAGLNHVRIPIGYWALGPLEGDPYVDGQLEYLDKAVEWAGAAGLKVLIDLHGAPGSQNGFDNSGRRGAIQWQQGDTVEQTLDAFDLLAERYLGSDTVAAIEAINEPNIPGGVDQGKLQEYYGSVYGIVNKYNAGTSVVYGDGFLPVESWNGFKTEGSKVVMDTHHYHMFDNGLIAMDIDSHIDAVCQFAHQHLEASDKPVIVGEWTGAVTDCAKYLNGKGNGARYDGSYAADKAIGDCSSLATGFVSKLSDEERSDMRRFIEAQLDAFELKSGWVFWTWKTEGAPGWDMSDLLEAGVFPTSPDDREFPKQC.

Residues 1 to 14 (MLPLLLCIVPYCWS) form the signal peptide. The active-site Proton donor is E199. 2 disulfides stabilise this stretch: C280–C405 and C306–C332. E298 (nucleophile) is an active-site residue.

This sequence belongs to the glycosyl hydrolase 5 (cellulase A) family. As to quaternary structure, monomer. It depends on Mn(2+) as a cofactor.

Its subcellular location is the secreted. It carries out the reaction Successive hydrolysis of beta-D-glucose units from the non-reducing ends of (1-&gt;3)-beta-D-glucans, releasing alpha-glucose.. Its function is as follows. Beta-glucanases participate in the metabolism of beta-glucan, the main structural component of the cell wall. It could also function biosynthetically as a transglycosylase. The protein is Glucan 1,3-beta-glucosidase A (exgA) of Aspergillus oryzae (strain ATCC 42149 / RIB 40) (Yellow koji mold).